A 416-amino-acid chain; its full sequence is Probable 26S proteasome regulatory subunit rpn-6.2 (416 aa).

A PCI domain is found at 217–386 (YKTSFSYFYE…DTVVVYPKAD (170 aa)).

Belongs to the proteasome subunit S9 family. Component of the lid subcomplex of the 19S proteasome regulatory particle complex (also named PA700 complex). The 26S proteasome consists of a 20S proteasome core and two 19S regulatory subunits.

Its function is as follows. Component of the lid subcomplex of the 26S proteasome, a multiprotein complex involved in the ATP-dependent degradation of ubiquitinated proteins. In the complex, rpn-6.2 is required for proteasome assembly. In Caenorhabditis elegans, this protein is Probable 26S proteasome regulatory subunit rpn-6.2 (rpn-6.2).